The following is a 293-amino-acid chain: uncharacterized protein (293 aa).

A compositionally biased stretch (basic residues) spans Met-1–Arg-10. Residues Met-1–Ala-28 form a disordered region. The segment covering Gly-15–Ala-28 has biased composition (polar residues).

The protein localises to the nucleus. This is an uncharacterized protein from Saccharomyces cerevisiae (strain ATCC 204508 / S288c) (Baker's yeast).